The following is a 66-amino-acid chain: Gallinacin-8 (66 aa).

Residues 1–19 (MKILYLLLAVLLTVLQSSL) form the signal peptide. The propeptide occupies 20-25 (GFMRVP). Intrachain disulfides connect C31-C60, C38-C54, and C43-C61.

It belongs to the beta-defensin family. Expressed in the liver, kidney, gall bladder, testis, ovary and male and femae reproductive tracts. Expressed in the ovarian stroma and the theca and granulosa layers of the ovarian follicle.

It is found in the secreted. Its subcellular location is the cytoplasmic granule. Has bactericidal activity. This is Gallinacin-8 (GAL8) from Gallus gallus (Chicken).